Here is a 190-residue protein sequence, read N- to C-terminus: Threonylcarbamoyl-AMP synthase (190 aa).

The YrdC-like domain maps to 7-190 (TGSIAAAVDL…ALTGELFRQG (184 aa)).

It belongs to the SUA5 family. TsaC subfamily.

The protein localises to the cytoplasm. It catalyses the reaction L-threonine + hydrogencarbonate + ATP = L-threonylcarbamoyladenylate + diphosphate + H2O. In terms of biological role, required for the formation of a threonylcarbamoyl group on adenosine at position 37 (t(6)A37) in tRNAs that read codons beginning with adenine. Catalyzes the conversion of L-threonine, HCO(3)(-)/CO(2) and ATP to give threonylcarbamoyl-AMP (TC-AMP) as the acyladenylate intermediate, with the release of diphosphate. This is Threonylcarbamoyl-AMP synthase from Salmonella arizonae (strain ATCC BAA-731 / CDC346-86 / RSK2980).